Here is a 148-residue protein sequence, read N- to C-terminus: Small ribosomal subunit protein bS6 (148 aa).

The interval 96 to 148 (HEEGQSAMLTRRDDRRERDGDDRPRRREGGFDRGDRGDRGPRRPRDTEAGEGA) is disordered.

It belongs to the bacterial ribosomal protein bS6 family.

Its function is as follows. Binds together with bS18 to 16S ribosomal RNA. The chain is Small ribosomal subunit protein bS6 from Brucella canis (strain ATCC 23365 / NCTC 10854 / RM-666).